Here is a 266-residue protein sequence, read N- to C-terminus: MKEIKVIIAGPRGRMGHEAVLLMERTEHFNLVAAVDYKHGGEKISDLPGMPALHAPIYADLHTCLDEVEADVLLDLTTPEVGKQHVTLAVERGLRSVIGTTGFTEEELARLTENAKEKAVGTIIAPNFAIGAVLMMKFSQMAAKYFQDVEVIELHHDQKLDAPSGTAVKTVELIRQNRESKQQGHPNEVEQLAGARGANVDGIHIHSVRLPGLIAHQEVMFGGDGQMLTVRHDSFNRASFMSGVKLSIETVMNLDHLVYGLENIID.

Position 10–15 (10–15 (GPRGRM)) interacts with NAD(+). Lys38 provides a ligand contact to NADP(+). NAD(+) is bound by residues 99 to 101 (GTT) and 125 to 128 (APNF). His155 serves as the catalytic Proton donor/acceptor. His156 is a binding site for (S)-2,3,4,5-tetrahydrodipicolinate. Residue Lys159 is the Proton donor of the active site. 165-166 (GT) provides a ligand contact to (S)-2,3,4,5-tetrahydrodipicolinate.

It belongs to the DapB family.

It is found in the cytoplasm. The enzyme catalyses (S)-2,3,4,5-tetrahydrodipicolinate + NAD(+) + H2O = (2S,4S)-4-hydroxy-2,3,4,5-tetrahydrodipicolinate + NADH + H(+). It catalyses the reaction (S)-2,3,4,5-tetrahydrodipicolinate + NADP(+) + H2O = (2S,4S)-4-hydroxy-2,3,4,5-tetrahydrodipicolinate + NADPH + H(+). It participates in amino-acid biosynthesis; L-lysine biosynthesis via DAP pathway; (S)-tetrahydrodipicolinate from L-aspartate: step 4/4. In terms of biological role, catalyzes the conversion of 4-hydroxy-tetrahydrodipicolinate (HTPA) to tetrahydrodipicolinate. This chain is 4-hydroxy-tetrahydrodipicolinate reductase, found in Bacillus cereus (strain B4264).